The primary structure comprises 65 residues: Large ribosomal subunit protein uL29 (65 aa).

Belongs to the universal ribosomal protein uL29 family.

The protein is Large ribosomal subunit protein uL29 of Desulforamulus reducens (strain ATCC BAA-1160 / DSM 100696 / MI-1) (Desulfotomaculum reducens).